The chain runs to 306 residues: 4-hydroxybenzoate geranyltransferase 2 (306 aa).

8 consecutive transmembrane segments (helical) span residues 38 to 58 (IGSW…ADLG), 61 to 81 (PKML…GCTI), 119 to 139 (LFIG…LAIV), 153 to 173 (ITYW…LLGS), 178 to 198 (GSVV…WTLV), 229 to 249 (IWIT…GFIV), 251 to 271 (IGLP…WQIF), and 285 to 305 (FVSN…GRLF).

This sequence belongs to the UbiA prenyltransferase family. Requires Mg(2+) as cofactor. As to expression, expressed only in roots.

The protein localises to the endoplasmic reticulum membrane. It carries out the reaction 4-hydroxybenzoate + (2E)-geranyl diphosphate = 3-geranyl-4-hydroxybenzoate + diphosphate. In terms of biological role, prenyltransferase involved in the biosynthesis of shikonin, a naphthoquinone secondary metabolite. Could accept only geranyl diphosphate and not dimethylallyl diphosphate, farnesyl diphosphate, or geranylgeranyl diphosphate as substrate. This chain is 4-hydroxybenzoate geranyltransferase 2 (PGT-2), found in Lithospermum erythrorhizon (Purple gromwell).